We begin with the raw amino-acid sequence, 269 residues long: Putative esterase/lipase 1 (269 aa).

Residue H27 is part of the active site. S94 (charge relay system) is an active-site residue.

The protein belongs to the lipase/esterase LIP3/BchO family.

The sequence is that of Putative esterase/lipase 1 from Mycoplasma pneumoniae (strain ATCC 29342 / M129 / Subtype 1) (Mycoplasmoides pneumoniae).